The sequence spans 396 residues: Tryptophan synthase beta chain (396 aa).

Lys88 is modified (N6-(pyridoxal phosphate)lysine).

The protein belongs to the TrpB family. In terms of assembly, tetramer of two alpha and two beta chains. It depends on pyridoxal 5'-phosphate as a cofactor.

The enzyme catalyses (1S,2R)-1-C-(indol-3-yl)glycerol 3-phosphate + L-serine = D-glyceraldehyde 3-phosphate + L-tryptophan + H2O. Its pathway is amino-acid biosynthesis; L-tryptophan biosynthesis; L-tryptophan from chorismate: step 5/5. Functionally, the beta subunit is responsible for the synthesis of L-tryptophan from indole and L-serine. The chain is Tryptophan synthase beta chain from Shewanella sp. (strain MR-7).